The chain runs to 204 residues: Inactive ribonuclease-like protein 9 (204 aa).

The first 26 residues, 1-26 (MMRTLITTHPLLLLLLLQQLLQPVQL), serve as a signal peptide directing secretion. Cystine bridges form between cysteine 97/cysteine 152, cysteine 115/cysteine 167, and cysteine 122/cysteine 129. N-linked (GlcNAc...) asparagine glycosylation is found at asparagine 130 and asparagine 142.

This sequence belongs to the pancreatic ribonuclease family.

It localises to the secreted. Functionally, does not exhibit any ribonuclease activity. This Chlorocebus pygerythrus (Vervet monkey) protein is Inactive ribonuclease-like protein 9 (RNASE9).